We begin with the raw amino-acid sequence, 308 residues long: SAP30-binding protein (308 aa).

Residues 15 to 101 are disordered; it reads AEDSEPESDG…EAEKRDPQEL (87 aa). The segment covering 16–26 has biased composition (acidic residues); it reads EDSEPESDGEA. Ser-18, Ser-22, Ser-43, and Ser-52 each carry phosphoserine. The span at 57-78 shows a compositional bias: acidic residues; that stretch reads DEDGYEEEEDENSRQSEDDDSE. Basic and acidic residues predominate over residues 79-99; it reads TEKPEADDPKDNTEAEKRDPQ. Lys-95 participates in a covalent cross-link: Glycyl lysine isopeptide (Lys-Gly) (interchain with G-Cter in SUMO2). A Phosphoserine modification is found at Ser-113. Glycyl lysine isopeptide (Lys-Gly) (interchain with G-Cter in SUMO2) cross-links involve residues Lys-220, Lys-304, and Lys-305.

Belongs to the HCNGP family. In terms of assembly, interacts with histone deacetylase complex subunit SAP30.

The protein localises to the nucleus. Plays a role in transcriptional repression by promoting histone deacetylase activity, leading to deacetylation of histone H3. May be involved in the regulation of beta-2-microglobulin genes. Functionally, (Microbial infection) Involved in transcriptional repression of HHV-1 genes TK and gC. This chain is SAP30-binding protein, found in Homo sapiens (Human).